A 520-amino-acid chain; its full sequence is Poly(A)-specific ribonuclease PNLDC1 (520 aa).

Residues Asp17, Glu19, Asp260, and Asp354 each coordinate Mg(2+). The chain crosses the membrane as a helical span at residues 495–515; the sequence is VNCLLQVCGIVTAWALLAFIL.

Belongs to the CAF1 family. Requires Mg(2+) as cofactor.

Its subcellular location is the endoplasmic reticulum membrane. The enzyme catalyses Exonucleolytic cleavage of poly(A) to 5'-AMP.. In terms of biological role, 3'-exoribonuclease that has a preference for poly(A) tails of mRNAs, thereby efficiently degrading poly(A) tails. Exonucleolytic degradation of the poly(A) tail is often the first step in the decay of eukaryotic mRNAs and is also used to silence certain maternal mRNAs translationally during oocyte maturation and early embryonic development. May act as a regulator of multipotency in embryonic stem cells. Is a critical factor for proper spermatogenesis, involved in pre-piRNAs processing to generate mature piRNAs. This Homo sapiens (Human) protein is Poly(A)-specific ribonuclease PNLDC1.